A 410-amino-acid chain; its full sequence is Monoglucosyldiacylglycerol epimerase (410 aa).

The first 14 residues, 1–14 (MAMAWLMGLGLALA), serve as a signal peptide directing secretion. 2 helical membrane-spanning segments follow: residues 71-91 (ALVMLAFGIWPPLLTWMWQGF) and 96-116 (LILAASAGMVYTLGFLLSAIA). Catalysis depends on Y320, which acts as the Proton acceptor. Residues 380–400 (IIVTINPITFIAFPVKEFFVS) traverse the membrane as a helical segment.

Belongs to the short-chain dehydrogenases/reductases (SDR) family.

It localises to the membrane. It carries out the reaction a 1,2-diacyl-3-O-(beta-D-glucopyranosyl)-sn-glycerol = a 1,2-diacyl-3-O-(beta-D-galactosyl)-sn-glycerol. Its function is as follows. Involved in the biosynthesis of galactolipids found in the photosynthetic membranes. Catalyzes the isomerization of monoglucosyldiacylglycerol (GlcDG) to yield monogalactosyldiacylglycerol (MGDG). This is Monoglucosyldiacylglycerol epimerase from Synechocystis sp. (strain ATCC 27184 / PCC 6803 / Kazusa).